The sequence spans 320 residues: ATP-dependent 6-phosphofructokinase (320 aa).

An ATP-binding site is contributed by Gly-12. ADP contacts are provided by residues 22–26 and 55–60; these read RGVVR and RYSVSD. Residues 73-74 and 103-106 each bind ATP; these read RF and GDGS. A Mg(2+)-binding site is contributed by Asp-104. Position 126-128 (126-128) interacts with substrate; that stretch reads TID. Asp-128 (proton acceptor) is an active-site residue. Position 155 (Arg-155) interacts with ADP. Residues Arg-163 and 170–172 each bind substrate; that span reads MGR. ADP is bound by residues 186 to 188, Lys-212, and 214 to 216; these read GCE and KKH. Residues Glu-223, Arg-244, and 250 to 253 each bind substrate; that span reads HIQR.

The protein belongs to the phosphofructokinase type A (PFKA) family. ATP-dependent PFK group I subfamily. Prokaryotic clade 'B1' sub-subfamily. In terms of assembly, homotetramer. The cofactor is Mg(2+).

The protein localises to the cytoplasm. It catalyses the reaction beta-D-fructose 6-phosphate + ATP = beta-D-fructose 1,6-bisphosphate + ADP + H(+). The protein operates within carbohydrate degradation; glycolysis; D-glyceraldehyde 3-phosphate and glycerone phosphate from D-glucose: step 3/4. Its activity is regulated as follows. Allosterically activated by ADP and other diphosphonucleosides, and allosterically inhibited by phosphoenolpyruvate. Its function is as follows. Catalyzes the phosphorylation of D-fructose 6-phosphate to fructose 1,6-bisphosphate by ATP, the first committing step of glycolysis. This Erwinia tasmaniensis (strain DSM 17950 / CFBP 7177 / CIP 109463 / NCPPB 4357 / Et1/99) protein is ATP-dependent 6-phosphofructokinase.